Consider the following 644-residue polypeptide: ATP-dependent zinc metalloprotease FtsH (644 aa).

The Cytoplasmic portion of the chain corresponds to 1-13 (MANNDNKHRRSMS). Residues 14 to 34 (MLLYIAVAIFVYLLLSNTLLP) traverse the membrane as a helical segment. Over 35-117 (GLLRQQIQTV…SIPDNSANML (83 aa)) the chain is Extracellular. A helical membrane pass occupies residues 118–138 (MYALIQYGIPLIIFLGIGFFI). Over 139–644 (NRSLKRAMGD…DEGSSTPSEE (506 aa)) the chain is Cytoplasmic. An ATP-binding site is contributed by 224-231 (GPPGTGKT). His445 is a Zn(2+) binding site. Glu446 is an active-site residue. Zn(2+) is bound by residues His449 and Asp522.

This sequence in the central section; belongs to the AAA ATPase family. The protein in the C-terminal section; belongs to the peptidase M41 family. In terms of assembly, homohexamer. Requires Zn(2+) as cofactor.

The protein resides in the cell membrane. Acts as a processive, ATP-dependent zinc metallopeptidase for both cytoplasmic and membrane proteins. Plays a role in the quality control of integral membrane proteins. In Lancefieldella parvula (strain ATCC 33793 / DSM 20469 / CCUG 32760 / JCM 10300 / KCTC 3663 / VPI 0546 / 1246) (Atopobium parvulum), this protein is ATP-dependent zinc metalloprotease FtsH.